Reading from the N-terminus, the 205-residue chain is Glycerol-3-phosphate acyltransferase (205 aa).

A run of 5 helical transmembrane segments spans residues 4 to 24, 80 to 100, 107 to 127, 130 to 150, and 155 to 175; these read IAPG…AILV, PFWL…PVFF, GVAT…GVMA, WLLT…SALI, and VWWF…LILL.

The protein belongs to the PlsY family. As to quaternary structure, probably interacts with PlsX.

The protein resides in the cell inner membrane. The catalysed reaction is an acyl phosphate + sn-glycerol 3-phosphate = a 1-acyl-sn-glycero-3-phosphate + phosphate. It functions in the pathway lipid metabolism; phospholipid metabolism. Its function is as follows. Catalyzes the transfer of an acyl group from acyl-phosphate (acyl-PO(4)) to glycerol-3-phosphate (G3P) to form lysophosphatidic acid (LPA). This enzyme utilizes acyl-phosphate as fatty acyl donor, but not acyl-CoA or acyl-ACP. The protein is Glycerol-3-phosphate acyltransferase of Klebsiella pneumoniae (strain 342).